The primary structure comprises 319 residues: tRNA N6-adenosine threonylcarbamoyltransferase (319 aa).

Positions 110 and 114 each coordinate Fe cation. Substrate contacts are provided by residues 135–139, aspartate 168, glycine 181, aspartate 185, and asparagine 277; that span reads VVSGG. Position 301 (aspartate 301) interacts with Fe cation.

It belongs to the KAE1 / TsaD family. It depends on Fe(2+) as a cofactor.

It is found in the cytoplasm. The enzyme catalyses L-threonylcarbamoyladenylate + adenosine(37) in tRNA = N(6)-L-threonylcarbamoyladenosine(37) in tRNA + AMP + H(+). Required for the formation of a threonylcarbamoyl group on adenosine at position 37 (t(6)A37) in tRNAs that read codons beginning with adenine. Is involved in the transfer of the threonylcarbamoyl moiety of threonylcarbamoyl-AMP (TC-AMP) to the N6 group of A37, together with TsaE and TsaB. TsaD likely plays a direct catalytic role in this reaction. The sequence is that of tRNA N6-adenosine threonylcarbamoyltransferase from Mycoplasma pneumoniae (strain ATCC 29342 / M129 / Subtype 1) (Mycoplasmoides pneumoniae).